The primary structure comprises 2789 residues: Testis-expressed protein 15 (2789 aa).

A compositionally biased stretch (polar residues) spans 34 to 46; the sequence is HNNTGSSTVTTSK. Disordered stretches follow at residues 34–99, 169–191, 1063–1166, 2303–2331, and 2351–2379; these read HNNT…SSEV, ENQN…AYTK, FSSK…EHQP, KNIS…DTTV, and KATF…DSLK. Basic and acidic residues predominate over residues 47–59; sequence SIKDPRLMRREES. The span at 80–98 shows a compositional bias: polar residues; that stretch reads DNVNSEIKSTPSNSASSSE. The segment covering 170–179 has biased composition (basic and acidic residues); sequence NQNHSEEKAQ. Residues 1063–1077 show a composition bias toward basic residues; it reads FSSKRKYDKRRKKRA. Low complexity-rich tracts occupy residues 1106–1116 and 1134–1160; these read RKSMASSVSKS and SQLP…NPSL.

Belongs to the TEX15 family. Interacts with PIWIL4 and PIWIL2. As to expression, expressed in testis, predominantly in germ cells. Low expression, if any, in ovary. Also expressed in several cancers.

Its subcellular location is the cytoplasm. It localises to the nucleus. Its function is as follows. Required during spermatogenesis for normal chromosome synapsis and meiotic recombination in germ cells. Necessary for formation of DMC1 and RAD51 foci on meiotic chromosomes, suggesting a specific role in DNA double-stranded break repair. Essential executor of PIWIL4-piRNA pathway directed transposon DNA methylation and silencing in the male embryonic germ cells. PIWIL4-piRNA binds to nascent transposon transcripts and interacts with TEX15, which may in turn recruit the epigenetic silencing machinery to the transposon loci. Not required for piRNA biosynthesis. This is Testis-expressed protein 15 (TEX15) from Homo sapiens (Human).